A 246-amino-acid chain; its full sequence is Probable transcriptional regulatory protein CGSHiEE_01480 (246 aa).

It belongs to the TACO1 family.

The protein resides in the cytoplasm. The chain is Probable transcriptional regulatory protein CGSHiEE_01480 from Haemophilus influenzae (strain PittEE).